We begin with the raw amino-acid sequence, 388 residues long: Lipoyl synthase, mitochondrial (388 aa).

The N-terminal 18 residues, 1–18, are a transit peptide targeting the mitochondrion; the sequence is MRLTTVQRRFLVSTKAKV. A compositionally biased stretch (low complexity) spans 22–39; that stretch reads SISSTANTGSASAGAPNG. The interval 22-43 is disordered; sequence SISSTANTGSASAGAPNGQTRR. [4Fe-4S] cluster is bound by residues Cys120, Cys125, Cys131, Cys151, Cys155, Cys158, and Ser366. The Radical SAM core domain maps to 134–355; sequence GKDKSKATAT…KDKAKEMGFL (222 aa).

Belongs to the radical SAM superfamily. Lipoyl synthase family. It depends on [4Fe-4S] cluster as a cofactor.

It localises to the mitochondrion. The enzyme catalyses [[Fe-S] cluster scaffold protein carrying a second [4Fe-4S](2+) cluster] + N(6)-octanoyl-L-lysyl-[protein] + 2 oxidized [2Fe-2S]-[ferredoxin] + 2 S-adenosyl-L-methionine + 4 H(+) = [[Fe-S] cluster scaffold protein] + N(6)-[(R)-dihydrolipoyl]-L-lysyl-[protein] + 4 Fe(3+) + 2 hydrogen sulfide + 2 5'-deoxyadenosine + 2 L-methionine + 2 reduced [2Fe-2S]-[ferredoxin]. Its pathway is protein modification; protein lipoylation via endogenous pathway; protein N(6)-(lipoyl)lysine from octanoyl-[acyl-carrier-protein]: step 2/2. In terms of biological role, catalyzes the radical-mediated insertion of two sulfur atoms into the C-6 and C-8 positions of the octanoyl moiety bound to the lipoyl domains of lipoate-dependent enzymes, thereby converting the octanoylated domains into lipoylated derivatives. In Candida glabrata (strain ATCC 2001 / BCRC 20586 / JCM 3761 / NBRC 0622 / NRRL Y-65 / CBS 138) (Yeast), this protein is Lipoyl synthase, mitochondrial.